A 686-amino-acid chain; its full sequence is tRNA (guanine(37)-N(1))-methyltransferase (686 aa).

The segment at 206-244 is disordered; it reads GGPSSVSLTEDTDGSEQPQGLPRAAAAPPPPSNKRRASY. S-adenosyl-L-methionine-binding positions include His428, 466–467, 495–496, and Asn530; these read DL and DG.

It belongs to the class I-like SAM-binding methyltransferase superfamily. TRM5/TYW2 family. As to quaternary structure, monomer.

It is found in the mitochondrion matrix. It localises to the nucleus. The protein localises to the cytoplasm. The enzyme catalyses guanosine(37) in tRNA + S-adenosyl-L-methionine = N(1)-methylguanosine(37) in tRNA + S-adenosyl-L-homocysteine + H(+). Its function is as follows. Specifically methylates the N1 position of guanosine-37 in various cytoplasmic and mitochondrial tRNAs. Methylation is not dependent on the nature of the nucleoside 5' of the target nucleoside. This is the first step in the biosynthesis of wybutosine (yW), a modified base adjacent to the anticodon of tRNAs and required for accurate decoding. The polypeptide is tRNA (guanine(37)-N(1))-methyltransferase (Leishmania major).